Consider the following 198-residue polypeptide: Recombination protein RecR (198 aa).

The C4-type zinc-finger motif lies at 58–73; the sequence is CSVCGNFTDTDPCAIC. Positions 81 to 175 constitute a Toprim domain; it reads DIICVVEQPK…KVTRIAAGIP (95 aa).

It belongs to the RecR family.

Functionally, may play a role in DNA repair. It seems to be involved in an RecBC-independent recombinational process of DNA repair. It may act with RecF and RecO. This is Recombination protein RecR from Clostridium perfringens (strain ATCC 13124 / DSM 756 / JCM 1290 / NCIMB 6125 / NCTC 8237 / Type A).